We begin with the raw amino-acid sequence, 256 residues long: Spheroidene monooxygenase (256 aa).

Positions Met-1–Ala-23 are enriched in low complexity. Residues Met-1 to Pro-26 are disordered.

It belongs to the CrtA family. Heme is required as a cofactor.

It catalyses the reaction spheroidene + 4 reduced [2Fe-2S]-[ferredoxin] + 2 O2 + 4 H(+) = spheroiden-2-one + 4 oxidized [2Fe-2S]-[ferredoxin] + 3 H2O. The catalysed reaction is spirilloxanthin + 4 reduced [2Fe-2S]-[ferredoxin] + 2 O2 + 4 H(+) = 2-oxospirilloxanthin + 4 oxidized [2Fe-2S]-[ferredoxin] + 3 H2O. The enzyme catalyses 2-oxospirilloxanthin + 4 reduced [2Fe-2S]-[ferredoxin] + 2 O2 + 4 H(+) = 2,2'-dioxospirilloxanthin + 4 oxidized [2Fe-2S]-[ferredoxin] + 3 H2O. It carries out the reaction spheroidene + 2 reduced [2Fe-2S]-[ferredoxin] + O2 + 2 H(+) = 2-hydroxyspheroidene + 2 oxidized [2Fe-2S]-[ferredoxin] + H2O. It catalyses the reaction 2-hydroxyspheroidene + 2 reduced [2Fe-2S]-[ferredoxin] + O2 + 2 H(+) = 2,2-dihydroxyspheroidene + 2 oxidized [2Fe-2S]-[ferredoxin] + H2O. The catalysed reaction is 2,2-dihydroxyspheroidene = spheroiden-2-one + H2O. The enzyme catalyses spirilloxanthin + 2 reduced [2Fe-2S]-[ferredoxin] + O2 + 2 H(+) = 2-hydroxyspirilloxanthin + 2 oxidized [2Fe-2S]-[ferredoxin] + H2O. It carries out the reaction 2-hydroxyspirilloxanthin + 2 reduced [2Fe-2S]-[ferredoxin] + O2 + 2 H(+) = 2,2-dihydroxyspirilloxanthin + 2 oxidized [2Fe-2S]-[ferredoxin] + H2O. It catalyses the reaction 2,2-dihydroxyspirilloxanthin = 2-oxospirilloxanthin + H2O. The catalysed reaction is 2-oxospirilloxanthin + 2 reduced [2Fe-2S]-[ferredoxin] + O2 + 2 H(+) = 2'-hydroxy-2-oxospirilloxanthin + 2 oxidized [2Fe-2S]-[ferredoxin] + H2O. The enzyme catalyses 2'-hydroxy-2-oxospirilloxanthin + 2 reduced [2Fe-2S]-[ferredoxin] + O2 + 2 H(+) = 2',2'-dihydroxy-2-oxospirilloxanthin + 2 oxidized [2Fe-2S]-[ferredoxin] + H2O. It carries out the reaction 2',2'-dihydroxy-2-oxospirilloxanthin = 2,2'-dioxospirilloxanthin + H2O. It participates in carotenoid biosynthesis; spheroidene biosynthesis. The protein operates within carotenoid biosynthesis; spirilloxanthin biosynthesis. In terms of biological role, involved in the biosynthesis of the carotenoids spheroidene and spirilloxanthin. Catalyzes the introduction of one keto group at the C-2 position of spheroidene and two keto groups at the C-2 and C-2' positions of spirilloxanthin. This is Spheroidene monooxygenase from Rubrivivax gelatinosus (Rhodocyclus gelatinosus).